We begin with the raw amino-acid sequence, 208 residues long: Thymidylate kinase (208 aa).

An ATP-binding site is contributed by 10–17 (GIDGSGKT).

It belongs to the thymidylate kinase family.

It catalyses the reaction dTMP + ATP = dTDP + ADP. In terms of biological role, phosphorylation of dTMP to form dTDP in both de novo and salvage pathways of dTTP synthesis. The sequence is that of Thymidylate kinase from Ligilactobacillus salivarius (strain UCC118) (Lactobacillus salivarius).